A 593-amino-acid chain; its full sequence is High affinity cGMP-specific 3',5'-cyclic phosphodiesterase 9A (593 aa).

The disordered stretch occupies residues 87-141 (SAGVEDKRTTSRGQSAERPLRDRRVVGLEQPRREGAFESGQVEPRPREPQGCYQE). Residues 104–122 (RPLRDRRVVGLEQPRREGA) are compositionally biased toward basic and acidic residues. In terms of domain architecture, PDEase spans 236–557 (PRRDVPTYPK…DRYEELKRID (322 aa)). H312 (proton donor) is an active-site residue. 312-316 (HNFRH) contributes to the 3',5'-cyclic GMP binding site. Zn(2+)-binding residues include H316, H352, and D353. A 3',5'-cyclic GMP-binding site is contributed by D353. D353 serves as a coordination point for Mg(2+). A Phosphoserine modification is found at S379. 3',5'-cyclic GMP is bound by residues D462, Y484, and 512 to 513 (AQ). D462 provides a ligand contact to Zn(2+). The tract at residues 564-593 (QKKTDSLTSGATEKSRERSRDVKNSEGDCA) is disordered. A compositionally biased stretch (basic and acidic residues) spans 576 to 593 (EKSRERSRDVKNSEGDCA).

This sequence belongs to the cyclic nucleotide phosphodiesterase family. PDE9 subfamily. In terms of assembly, homodimer. Zn(2+) is required as a cofactor. It depends on Mg(2+) as a cofactor. Expressed in all tissues examined (testis, brain, small intestine, skeletal muscle, heart, lung, thymus, spleen, placenta, kidney, liver, pancreas, ovary and prostate) except blood. Highest levels in brain, heart, kidney, spleen, prostate and colon. Isoform PDE9A12 is found in prostate. In brain, present in the cortex, cerebellum, and subiculum (at protein level). In heart, primarily localizes to myocytes.

It is found in the cell projection. It localises to the ruffle membrane. The protein resides in the cytoplasm. Its subcellular location is the perinuclear region. The protein localises to the golgi apparatus. It is found in the endoplasmic reticulum. It localises to the cell membrane. The protein resides in the sarcolemma. The enzyme catalyses 3',5'-cyclic GMP + H2O = GMP + H(+). Its pathway is purine metabolism; 3',5'-cyclic GMP degradation; GMP from 3',5'-cyclic GMP: step 1/1. With respect to regulation, inhibited by zaprinast; inhibitor is however not specific to PDE9A. Specifically inhibited by BAY-73-6691 (1-(2-chlorophenyl)-6-((2R)-3,3,3- trifluoro-2-methylpropyl)-1,5-dihydro-4H-pyrazolo(3,4-d)pyrimidine-4-one). BAY-73-9961 has two enantiomers, (R) and (S), due to the presence of a chiral center, and both forms vary in their pattern of interaction. Specifically inhibited by PF-4181366 (4H-Pyrazolo[3,4-d]pyrimidin-4-one, 1- cyclopentyl-1,5-dihydro-6-[(3S,4S)-4-methyl- 1-(6-quinoxalinylmethyl)-3-pyrrolidinyl]-one). Specifically inhibited by PF-4449613 ((R)-6-(1-(3-phenoxyazetidin-1-yl)ethyl)-1-(tetrahydro-2H-pyran-4-yl)-1H-pyrazolo[3,4-d]pyrimidin- 4(5H)-one). Specifically inhibited by inhibitor 28 (2-((1-(2-Chlorophenyl)-4-hydroxy-1Hpyrazolo[ 3,4-d]pyrimidin-6-yl)amino)-N-(4- methoxyphenyl)propanamide): inhibitor forms a hydrogen bond with Tyr-484 and Gln-513. Specifically inhibited by 1-Cyclopentyl-6-[(1r)-1-(3-phenoxyazetidin- 1-Yl)ethyl]-1,5-dihydro-4h-pyrazolo[3,4-D] pyrimidin-4-one: inhibitor forms a hydrogen bond with Tyr-484 and Gln-513. Its function is as follows. Specifically hydrolyzes the second messenger cGMP, which is a key regulator of many important physiological processes. Highly specific: compared to other members of the cyclic nucleotide phosphodiesterase family, has the highest affinity and selectivity for cGMP. Specifically regulates natriuretic-peptide-dependent cGMP signaling in heart, acting as a regulator of cardiac hypertrophy in myocytes and muscle. Does not regulate nitric oxide-dependent cGMP in heart. Additional experiments are required to confirm whether its ability to hydrolyze natriuretic-peptide-dependent cGMP is specific to heart or is a general feature of the protein. In brain, involved in cognitive function, such as learning and long-term memory. The sequence is that of High affinity cGMP-specific 3',5'-cyclic phosphodiesterase 9A from Homo sapiens (Human).